A 243-amino-acid polypeptide reads, in one-letter code: Small ribosomal subunit protein uS2c (243 aa).

Belongs to the universal ribosomal protein uS2 family.

Its subcellular location is the plastid. It is found in the chloroplast. In Cyanidium caldarium (Red alga), this protein is Small ribosomal subunit protein uS2c (rps2).